The chain runs to 218 residues: Guanylate kinase (218 aa).

In terms of domain architecture, Guanylate kinase-like spans 14 to 193 (GLMLVLSSPS…AFAEVRGIVV (180 aa)). 21–28 (SPSGAGKS) provides a ligand contact to ATP.

The protein belongs to the guanylate kinase family.

The protein resides in the cytoplasm. The enzyme catalyses GMP + ATP = GDP + ADP. Functionally, essential for recycling GMP and indirectly, cGMP. The polypeptide is Guanylate kinase (gmk) (Mesorhizobium japonicum (strain LMG 29417 / CECT 9101 / MAFF 303099) (Mesorhizobium loti (strain MAFF 303099))).